The chain runs to 131 residues: Small ribosomal subunit protein bS6 (131 aa).

Residues 99–131 (ASPMVKAKDERRERREDFATETNEDSDAGDSEE) form a disordered region. The span at 104–116 (KAKDERRERREDF) shows a compositional bias: basic and acidic residues. The segment covering 120–131 (TNEDSDAGDSEE) has biased composition (acidic residues).

The protein belongs to the bacterial ribosomal protein bS6 family.

Binds together with bS18 to 16S ribosomal RNA. The sequence is that of Small ribosomal subunit protein bS6 from Sodalis glossinidius (strain morsitans).